We begin with the raw amino-acid sequence, 480 residues long: Transposase for transposon Tn552 (480 aa).

The segment at residues 36-55 (LSSISKSKGIALSTLYRWNK) is a DNA-binding region (H-T-H motif). Positions 155–341 (ESSRPNEIWQ…TPINRWNSNH (187 aa)) constitute an Integrase catalytic domain. The segment at 438–480 (RKHLKQNIASPSTTDLIKEEKSYGYSPQETTKNVKKLKRYRND) is disordered. Positions 470–480 (NVKKLKRYRND) are enriched in basic residues.

The protein is Transposase for transposon Tn552 of Staphylococcus aureus.